Reading from the N-terminus, the 139-residue chain is Nucleoside diphosphate kinase (139 aa).

Residues Lys10, Phe58, Arg86, Thr92, Arg103, and Asn113 each coordinate ATP. Residue His116 is the Pros-phosphohistidine intermediate of the active site.

This sequence belongs to the NDK family. As to quaternary structure, homotetramer. The cofactor is Mg(2+).

The protein resides in the cytoplasm. The enzyme catalyses a 2'-deoxyribonucleoside 5'-diphosphate + ATP = a 2'-deoxyribonucleoside 5'-triphosphate + ADP. It catalyses the reaction a ribonucleoside 5'-diphosphate + ATP = a ribonucleoside 5'-triphosphate + ADP. Functionally, major role in the synthesis of nucleoside triphosphates other than ATP. The ATP gamma phosphate is transferred to the NDP beta phosphate via a ping-pong mechanism, using a phosphorylated active-site intermediate. The protein is Nucleoside diphosphate kinase of Caulobacter sp. (strain K31).